A 157-amino-acid chain; its full sequence is 2-C-methyl-D-erythritol 2,4-cyclodiphosphate synthase (157 aa).

A divalent metal cation is bound by residues aspartate 8 and histidine 10. 4-CDP-2-C-methyl-D-erythritol 2-phosphate is bound by residues 8-10 and 34-35; these read DVH and HS. Histidine 42 is a binding site for a divalent metal cation. Residues 56–58, 61–65, 132–135, phenylalanine 139, and arginine 142 each bind 4-CDP-2-C-methyl-D-erythritol 2-phosphate; these read DIG, FPDSD, and TTTE.

It belongs to the IspF family. As to quaternary structure, homotrimer. The cofactor is a divalent metal cation.

The enzyme catalyses 4-CDP-2-C-methyl-D-erythritol 2-phosphate = 2-C-methyl-D-erythritol 2,4-cyclic diphosphate + CMP. It functions in the pathway isoprenoid biosynthesis; isopentenyl diphosphate biosynthesis via DXP pathway; isopentenyl diphosphate from 1-deoxy-D-xylulose 5-phosphate: step 4/6. In terms of biological role, involved in the biosynthesis of isopentenyl diphosphate (IPP) and dimethylallyl diphosphate (DMAPP), two major building blocks of isoprenoid compounds. Catalyzes the conversion of 4-diphosphocytidyl-2-C-methyl-D-erythritol 2-phosphate (CDP-ME2P) to 2-C-methyl-D-erythritol 2,4-cyclodiphosphate (ME-CPP) with a corresponding release of cytidine 5-monophosphate (CMP). This Syntrophomonas wolfei subsp. wolfei (strain DSM 2245B / Goettingen) protein is 2-C-methyl-D-erythritol 2,4-cyclodiphosphate synthase.